The following is a 67-amino-acid chain: ATP synthase F(0) complex subunit 8 (67 aa).

Residues 8 to 24 (TWFITIISSMATLFILF) traverse the membrane as a helical segment. Lys-54 carries the N6-acetyllysine; alternate modification. Lys-54 carries the post-translational modification N6-succinyllysine; alternate. Residue Lys-57 is modified to N6-acetyllysine.

It belongs to the ATPase protein 8 family. In terms of assembly, component of the ATP synthase complex composed at least of ATP5F1A/subunit alpha, ATP5F1B/subunit beta, ATP5MC1/subunit c (homooctomer), MT-ATP6/subunit a, MT-ATP8/subunit 8, ATP5ME/subunit e, ATP5MF/subunit f, ATP5MG/subunit g, ATP5MK/subunit k, ATP5MJ/subunit j, ATP5F1C/subunit gamma, ATP5F1D/subunit delta, ATP5F1E/subunit epsilon, ATP5PF/subunit F6, ATP5PB/subunit b, ATP5PD/subunit d, ATP5PO/subunit OSCP. ATP synthase complex consists of a soluble F(1) head domain (subunits alpha(3) and beta(3)) - the catalytic core - and a membrane F(0) domain - the membrane proton channel (subunits c, a, 8, e, f, g, k and j). These two domains are linked by a central stalk (subunits gamma, delta, and epsilon) rotating inside the F1 region and a stationary peripheral stalk (subunits F6, b, d, and OSCP). Interacts with PRICKLE3.

The protein resides in the mitochondrion membrane. Its function is as follows. Subunit 8, of the mitochondrial membrane ATP synthase complex (F(1)F(0) ATP synthase or Complex V) that produces ATP from ADP in the presence of a proton gradient across the membrane which is generated by electron transport complexes of the respiratory chain. ATP synthase complex consist of a soluble F(1) head domain - the catalytic core - and a membrane F(1) domain - the membrane proton channel. These two domains are linked by a central stalk rotating inside the F(1) region and a stationary peripheral stalk. During catalysis, ATP synthesis in the catalytic domain of F(1) is coupled via a rotary mechanism of the central stalk subunits to proton translocation. In vivo, can only synthesize ATP although its ATP hydrolase activity can be activated artificially in vitro. Part of the complex F(0) domain. In Rattus norvegicus (Rat), this protein is ATP synthase F(0) complex subunit 8.